The following is a 294-amino-acid chain: Urease accessory protein UreD 1 (294 aa).

Positions 1-22 (MALSLDGLPEKPAPAEAPSPPV) are disordered. Residues 11–21 (KPAPAEAPSPP) are compositionally biased toward pro residues.

This sequence belongs to the UreD family. UreD, UreF and UreG form a complex that acts as a GTP-hydrolysis-dependent molecular chaperone, activating the urease apoprotein by helping to assemble the nickel containing metallocenter of UreC. The UreE protein probably delivers the nickel.

It localises to the cytoplasm. Required for maturation of urease via the functional incorporation of the urease nickel metallocenter. In Methylorubrum extorquens (strain PA1) (Methylobacterium extorquens), this protein is Urease accessory protein UreD 1.